Consider the following 532-residue polypeptide: CTP synthase (532 aa).

The interval 1 to 267 is amidoligase domain; the sequence is MAKFIFVTGG…QDIIIEQLQL (267 aa). Ser13 is a binding site for CTP. Ser13 is a binding site for UTP. 14–19 serves as a coordination point for ATP; sequence GLGKGI. Tyr54 is a binding site for L-glutamine. Asp71 lines the ATP pocket. Asp71 and Glu141 together coordinate Mg(2+). Residues 148-150, 188-193, and Lys224 each bind CTP; these read DIE and KTKPIQ. Residues 188 to 193 and Lys224 each bind UTP; that span reads KTKPIQ. The region spanning 292–532 is the Glutamine amidotransferase type-1 domain; the sequence is EISFVGKYIE…FIKAIIENNK (241 aa). Residue Gly354 participates in L-glutamine binding. The active-site Nucleophile; for glutamine hydrolysis is the Cys381. Residues 382 to 385, Glu405, and Arg461 contribute to the L-glutamine site; that span reads LGMQ. Active-site residues include His506 and Glu508.

It belongs to the CTP synthase family. In terms of assembly, homotetramer.

It carries out the reaction UTP + L-glutamine + ATP + H2O = CTP + L-glutamate + ADP + phosphate + 2 H(+). It catalyses the reaction L-glutamine + H2O = L-glutamate + NH4(+). The enzyme catalyses UTP + NH4(+) + ATP = CTP + ADP + phosphate + 2 H(+). Its pathway is pyrimidine metabolism; CTP biosynthesis via de novo pathway; CTP from UDP: step 2/2. With respect to regulation, allosterically activated by GTP, when glutamine is the substrate; GTP has no effect on the reaction when ammonia is the substrate. The allosteric effector GTP functions by stabilizing the protein conformation that binds the tetrahedral intermediate(s) formed during glutamine hydrolysis. Inhibited by the product CTP, via allosteric rather than competitive inhibition. In terms of biological role, catalyzes the ATP-dependent amination of UTP to CTP with either L-glutamine or ammonia as the source of nitrogen. Regulates intracellular CTP levels through interactions with the four ribonucleotide triphosphates. The sequence is that of CTP synthase from Mycoplasma capricolum subsp. capricolum (strain California kid / ATCC 27343 / NCTC 10154).